The primary structure comprises 478 residues: Dynein regulatory complex subunit 4 (478 aa).

The span at 1 to 12 shows a compositional bias: basic residues; it reads MAPKRRGKKGKA. The disordered stretch occupies residues 1-32; the sequence is MAPKRRGKKGKAKGNAVVDGVAPEDMSKEQVE. Residues 1–114 are regulates microtubule-binding; that stretch reads MAPKRRGKKG…LLYEHQNNLA (114 aa). 2 coiled-coil regions span residues 24 to 201 and 243 to 427; these read EDMS…DELD and NNLA…LARV. Positions 115 to 258 are microtubule-binding; it reads EVKTEGTVVM…NSLKEQMEDM (144 aa). The segment at 357 to 478 is interaction with SMO; the sequence is QQKTGFKNLV…GPAGLVGAPT (122 aa).

The protein belongs to the DRC4 family. In terms of assembly, component of the nexin-dynein regulatory complex (N-DRC). Interacts with microtubules. Interacts with SMO. Interacts (via coiled-coil domains) with RAB3B (in GTP-bound form). Interacts with DRC1. Interacts with DRC7.

It localises to the cytoplasm. The protein localises to the cytoskeleton. Its subcellular location is the cell projection. It is found in the cilium. The protein resides in the flagellum. It localises to the cilium axoneme. The protein localises to the cilium basal body. Its subcellular location is the golgi apparatus. It is found in the flagellum axoneme. Component of the nexin-dynein regulatory complex (N-DRC), a key regulator of ciliary/flagellar motility which maintains the alignment and integrity of the distal axoneme and regulates microtubule sliding in motile axonemes. Plays an important role in the assembly of the N-DRC linker. Plays dual roles at both the primary (or non-motile) cilia to regulate hedgehog signaling and in motile cilia to coordinate cilia movement. Required for proper motile cilia functioning. Positively regulates ciliary smoothened (SMO)-dependent Hedgehog (Hh) signaling pathway by facilitating the trafficking of SMO into the cilium and the stimulation of SMO activity in a GRK2-dependent manner. This chain is Dynein regulatory complex subunit 4 (Gas8), found in Rattus norvegicus (Rat).